Reading from the N-terminus, the 320-residue chain is Adhesin MafA 3 (320 aa).

A signal peptide spans 1 to 18 (MQARLLIPILFSVFILSA). The N-palmitoyl cysteine moiety is linked to residue C19. C19 carries the S-diacylglycerol cysteine lipid modification. Residues 288–298 (HTGNSAPSVET) show a composition bias toward polar residues. Residues 288 to 320 (HTGNSAPSVETDNSHEGYGYSDEVVRQHRQGQP) are disordered.

This sequence belongs to the MafA family.

The protein localises to the cell outer membrane. The protein is Adhesin MafA 3 (mafA3) of Neisseria meningitidis serogroup C / serotype 2a (strain ATCC 700532 / DSM 15464 / FAM18).